We begin with the raw amino-acid sequence, 185 residues long: Ribosome-recycling factor (185 aa).

It belongs to the RRF family.

The protein resides in the cytoplasm. Functionally, responsible for the release of ribosomes from messenger RNA at the termination of protein biosynthesis. May increase the efficiency of translation by recycling ribosomes from one round of translation to another. In Clostridium beijerinckii (strain ATCC 51743 / NCIMB 8052) (Clostridium acetobutylicum), this protein is Ribosome-recycling factor.